The sequence spans 346 residues: Holliday junction branch migration complex subunit RuvB (346 aa).

Positions 1–182 (MKIELLTTPA…FGINSRFDYY (182 aa)) are large ATPase domain (RuvB-L). ATP is bound by residues I21, R22, G63, K66, T67, T68, 129–131 (EDF), R172, Y182, and R219. Residue T67 coordinates Mg(2+). The interval 183–253 (SPDLLEGIVM…IAMKTLECLD (71 aa)) is small ATPAse domain (RuvB-S). The tract at residues 256–346 (EEGLDDMDKK…GLFDADGNLS (91 aa)) is head domain (RuvB-H). 2 residues coordinate DNA: R311 and R316.

The protein belongs to the RuvB family. As to quaternary structure, homohexamer. Forms an RuvA(8)-RuvB(12)-Holliday junction (HJ) complex. HJ DNA is sandwiched between 2 RuvA tetramers; dsDNA enters through RuvA and exits via RuvB. An RuvB hexamer assembles on each DNA strand where it exits the tetramer. Each RuvB hexamer is contacted by two RuvA subunits (via domain III) on 2 adjacent RuvB subunits; this complex drives branch migration. In the full resolvosome a probable DNA-RuvA(4)-RuvB(12)-RuvC(2) complex forms which resolves the HJ.

Its subcellular location is the cytoplasm. It carries out the reaction ATP + H2O = ADP + phosphate + H(+). In terms of biological role, the RuvA-RuvB-RuvC complex processes Holliday junction (HJ) DNA during genetic recombination and DNA repair, while the RuvA-RuvB complex plays an important role in the rescue of blocked DNA replication forks via replication fork reversal (RFR). RuvA specifically binds to HJ cruciform DNA, conferring on it an open structure. The RuvB hexamer acts as an ATP-dependent pump, pulling dsDNA into and through the RuvAB complex. RuvB forms 2 homohexamers on either side of HJ DNA bound by 1 or 2 RuvA tetramers; 4 subunits per hexamer contact DNA at a time. Coordinated motions by a converter formed by DNA-disengaged RuvB subunits stimulates ATP hydrolysis and nucleotide exchange. Immobilization of the converter enables RuvB to convert the ATP-contained energy into a lever motion, pulling 2 nucleotides of DNA out of the RuvA tetramer per ATP hydrolyzed, thus driving DNA branch migration. The RuvB motors rotate together with the DNA substrate, which together with the progressing nucleotide cycle form the mechanistic basis for DNA recombination by continuous HJ branch migration. Branch migration allows RuvC to scan DNA until it finds its consensus sequence, where it cleaves and resolves cruciform DNA. In Chlorobium phaeovibrioides (strain DSM 265 / 1930) (Prosthecochloris vibrioformis (strain DSM 265)), this protein is Holliday junction branch migration complex subunit RuvB.